Reading from the N-terminus, the 298-residue chain is Lipoyl synthase (298 aa).

[4Fe-4S] cluster is bound by residues Cys40, Cys45, Cys51, Cys67, Cys71, Cys74, and Ser280. A Radical SAM core domain is found at 53-269 (AVRRTATFMI…KEIAMQKGFS (217 aa)).

This sequence belongs to the radical SAM superfamily. Lipoyl synthase family. The cofactor is [4Fe-4S] cluster.

It localises to the cytoplasm. It catalyses the reaction [[Fe-S] cluster scaffold protein carrying a second [4Fe-4S](2+) cluster] + N(6)-octanoyl-L-lysyl-[protein] + 2 oxidized [2Fe-2S]-[ferredoxin] + 2 S-adenosyl-L-methionine + 4 H(+) = [[Fe-S] cluster scaffold protein] + N(6)-[(R)-dihydrolipoyl]-L-lysyl-[protein] + 4 Fe(3+) + 2 hydrogen sulfide + 2 5'-deoxyadenosine + 2 L-methionine + 2 reduced [2Fe-2S]-[ferredoxin]. Its pathway is protein modification; protein lipoylation via endogenous pathway; protein N(6)-(lipoyl)lysine from octanoyl-[acyl-carrier-protein]. Functionally, catalyzes the radical-mediated insertion of two sulfur atoms into the C-6 and C-8 positions of the octanoyl moiety bound to the lipoyl domains of lipoate-dependent enzymes, thereby converting the octanoylated domains into lipoylated derivatives. This Bacillus velezensis (strain DSM 23117 / BGSC 10A6 / LMG 26770 / FZB42) (Bacillus amyloliquefaciens subsp. plantarum) protein is Lipoyl synthase.